Here is a 165-residue protein sequence, read N- to C-terminus: Large ribosomal subunit protein uL10 (165 aa).

It belongs to the universal ribosomal protein uL10 family. Part of the ribosomal stalk of the 50S ribosomal subunit. The N-terminus interacts with L11 and the large rRNA to form the base of the stalk. The C-terminus forms an elongated spine to which L12 dimers bind in a sequential fashion forming a multimeric L10(L12)X complex.

Functionally, forms part of the ribosomal stalk, playing a central role in the interaction of the ribosome with GTP-bound translation factors. In Shewanella piezotolerans (strain WP3 / JCM 13877), this protein is Large ribosomal subunit protein uL10.